Reading from the N-terminus, the 348-residue chain is UPF0283 membrane protein HAPS_0079 (348 aa).

3 consecutive transmembrane segments (helical) span residues 57–77 (FLAA…QWLI), 86–106 (IYFA…GAII), and 203–223 (ENAI…MVAW).

This sequence belongs to the UPF0283 family.

It localises to the cell inner membrane. The protein is UPF0283 membrane protein HAPS_0079 of Glaesserella parasuis serovar 5 (strain SH0165) (Haemophilus parasuis).